The following is a 285-amino-acid chain: Protoheme IX farnesyltransferase (285 aa).

9 consecutive transmembrane segments (helical) span residues 8 to 28 (ITKP…FLFA), 36 to 56 (YVLF…ACVF), 80 to 100 (LLPV…GLSI), 107 to 127 (FISM…YTMF), 133 to 153 (FYST…GYTA), 163 to 183 (ILLF…ISIM), 209 to 229 (IFFY…LGYL), 232 to 252 (NFLL…YSNI), and 265 to 285 (FYFS…DVFF).

Belongs to the UbiA prenyltransferase family. Protoheme IX farnesyltransferase subfamily.

It is found in the cell membrane. The enzyme catalyses heme b + (2E,6E)-farnesyl diphosphate + H2O = Fe(II)-heme o + diphosphate. The protein operates within porphyrin-containing compound metabolism; heme O biosynthesis; heme O from protoheme: step 1/1. In terms of biological role, converts heme B (protoheme IX) to heme O by substitution of the vinyl group on carbon 2 of heme B porphyrin ring with a hydroxyethyl farnesyl side group. The chain is Protoheme IX farnesyltransferase from Buchnera aphidicola subsp. Acyrthosiphon pisum (strain Tuc7).